The chain runs to 566 residues: Transcription factor opdL (566 aa).

A DNA-binding region (zn(2)-C6 fungal-type) is located at residues 15 to 45; sequence CATCARAKCRCVPRNGGRGRCERCHHLNKEC.

It is found in the nucleus. Functionally, transcription factor; part of the gene cluster that mediates the biosynthesis of oxopyrrolidines, polyketide-amino acid hybrid compounds with feature structures of tetramic acid. This Penicillium oxalicum (strain 114-2 / CGMCC 5302) (Penicillium decumbens) protein is Transcription factor opdL.